We begin with the raw amino-acid sequence, 113 residues long: Cytochrome c55X (113 aa).

The first 26 residues, Met1 to Ala26, serve as a signal peptide directing secretion. Heme c is bound by residues Cys45, Cys48, and His49.

In terms of processing, binds 1 heme c group covalently per subunit.

It localises to the periplasm. In terms of biological role, monoheme c-type cytochrome. The chain is Cytochrome c55X (nirC) from Stutzerimonas stutzeri (Pseudomonas stutzeri).